The chain runs to 743 residues: Phosphoribosylformylglycinamidine synthase subunit PurL (743 aa).

The active site involves H50. Positions 53 and 92 each coordinate ATP. E94 contributes to the Mg(2+) binding site. Residues 95–98 and R117 contribute to the substrate site; that span reads SHNH. Catalysis depends on H96, which acts as the Proton acceptor. Position 118 (D118) interacts with Mg(2+). Residue Q241 participates in substrate binding. D269 serves as a coordination point for Mg(2+). 313-315 provides a ligand contact to substrate; sequence ESQ. The ATP site is built by D494 and G531. Mg(2+) is bound at residue N532. S534 lines the substrate pocket.

It belongs to the FGAMS family. Monomer. Part of the FGAM synthase complex composed of 1 PurL, 1 PurQ and 2 PurS subunits.

The protein localises to the cytoplasm. The enzyme catalyses N(2)-formyl-N(1)-(5-phospho-beta-D-ribosyl)glycinamide + L-glutamine + ATP + H2O = 2-formamido-N(1)-(5-O-phospho-beta-D-ribosyl)acetamidine + L-glutamate + ADP + phosphate + H(+). It functions in the pathway purine metabolism; IMP biosynthesis via de novo pathway; 5-amino-1-(5-phospho-D-ribosyl)imidazole from N(2)-formyl-N(1)-(5-phospho-D-ribosyl)glycinamide: step 1/2. In terms of biological role, part of the phosphoribosylformylglycinamidine synthase complex involved in the purines biosynthetic pathway. Catalyzes the ATP-dependent conversion of formylglycinamide ribonucleotide (FGAR) and glutamine to yield formylglycinamidine ribonucleotide (FGAM) and glutamate. The FGAM synthase complex is composed of three subunits. PurQ produces an ammonia molecule by converting glutamine to glutamate. PurL transfers the ammonia molecule to FGAR to form FGAM in an ATP-dependent manner. PurS interacts with PurQ and PurL and is thought to assist in the transfer of the ammonia molecule from PurQ to PurL. The sequence is that of Phosphoribosylformylglycinamidine synthase subunit PurL from Sinorhizobium medicae (strain WSM419) (Ensifer medicae).